A 402-amino-acid polypeptide reads, in one-letter code: 1-deoxy-D-xylulose 5-phosphate reductoisomerase (402 aa).

Thr-21, Gly-22, Ser-23, Ile-24, Gly-47, Asn-50, and Asn-127 together coordinate NADPH. Residue Lys-128 participates in 1-deoxy-D-xylulose 5-phosphate binding. Glu-129 serves as a coordination point for NADPH. Position 151 (Asp-151) interacts with Mn(2+). 1-deoxy-D-xylulose 5-phosphate contacts are provided by Ser-152, Glu-153, Ser-177, and His-200. Glu-153 contacts Mn(2+). Gly-206 contacts NADPH. Residues Ser-213, Asn-218, Lys-219, and Glu-222 each coordinate 1-deoxy-D-xylulose 5-phosphate. A Mn(2+)-binding site is contributed by Glu-222.

Belongs to the DXR family. Requires Mg(2+) as cofactor. Mn(2+) serves as cofactor.

The catalysed reaction is 2-C-methyl-D-erythritol 4-phosphate + NADP(+) = 1-deoxy-D-xylulose 5-phosphate + NADPH + H(+). It functions in the pathway isoprenoid biosynthesis; isopentenyl diphosphate biosynthesis via DXP pathway; isopentenyl diphosphate from 1-deoxy-D-xylulose 5-phosphate: step 1/6. In terms of biological role, catalyzes the NADPH-dependent rearrangement and reduction of 1-deoxy-D-xylulose-5-phosphate (DXP) to 2-C-methyl-D-erythritol 4-phosphate (MEP). This is 1-deoxy-D-xylulose 5-phosphate reductoisomerase from Mycobacterium ulcerans (strain Agy99).